Here is a 63-residue protein sequence, read N- to C-terminus: ComG operon repressor (63 aa).

In terms of biological role, negatively regulates the transcription of the comG operon. This Bacillus subtilis (strain 168) protein is ComG operon repressor (comZ).